The primary structure comprises 436 residues: Anaerobic glycerol-3-phosphate dehydrogenase subunit B (436 aa).

This sequence belongs to the anaerobic G-3-P dehydrogenase subunit B family. In terms of assembly, composed of a catalytic GlpA/B dimer and of membrane bound GlpC. FMN is required as a cofactor.

The enzyme catalyses a quinone + sn-glycerol 3-phosphate = dihydroxyacetone phosphate + a quinol. The protein operates within polyol metabolism; glycerol degradation via glycerol kinase pathway; glycerone phosphate from sn-glycerol 3-phosphate (anaerobic route): step 1/1. In terms of biological role, conversion of glycerol 3-phosphate to dihydroxyacetone. Uses fumarate or nitrate as electron acceptor. This Vibrio cholerae serotype O1 (strain ATCC 39315 / El Tor Inaba N16961) protein is Anaerobic glycerol-3-phosphate dehydrogenase subunit B.